Consider the following 590-residue polypeptide: Probable metalloendopeptidase G1-type (590 aa).

Histidine 41 lines the Zn(2+) pocket. Residue glutamate 44 is part of the active site. Residue histidine 45 participates in Zn(2+) binding.

Belongs to the peptidase M44 family. Requires Zn(2+) as cofactor.

In terms of biological role, seems to be involved in viral proteins maturation by cleavage at Ala-Gly-|-Xaa motifs. The protein is Probable metalloendopeptidase G1-type of Homo sapiens (Human).